The sequence spans 481 residues: 3-isopropylmalate dehydratase large subunit (481 aa).

C357, C417, and C420 together coordinate [4Fe-4S] cluster. Positions 429–441 are enriched in polar residues; the sequence is SPGQRCASTSNRN. Positions 429–451 are disordered; sequence SPGQRCASTSNRNFEGRQGKGGR.

It belongs to the aconitase/IPM isomerase family. LeuC type 1 subfamily. In terms of assembly, heterodimer of LeuC and LeuD. Requires [4Fe-4S] cluster as cofactor.

It carries out the reaction (2R,3S)-3-isopropylmalate = (2S)-2-isopropylmalate. It functions in the pathway amino-acid biosynthesis; L-leucine biosynthesis; L-leucine from 3-methyl-2-oxobutanoate: step 2/4. Functionally, catalyzes the isomerization between 2-isopropylmalate and 3-isopropylmalate, via the formation of 2-isopropylmaleate. The polypeptide is 3-isopropylmalate dehydratase large subunit (Mycobacterium sp. (strain KMS)).